We begin with the raw amino-acid sequence, 505 residues long: Deoxyguanosinetriphosphate triphosphohydrolase (505 aa).

One can recognise an HD domain in the interval 66 to 273; sequence RLTHSMEVQQ…MEAADDISYC (208 aa).

The protein belongs to the dGTPase family. Type 1 subfamily. As to quaternary structure, homotetramer. The cofactor is Mg(2+).

It catalyses the reaction dGTP + H2O = 2'-deoxyguanosine + triphosphate + H(+). Functionally, dGTPase preferentially hydrolyzes dGTP over the other canonical NTPs. This chain is Deoxyguanosinetriphosphate triphosphohydrolase, found in Salmonella schwarzengrund (strain CVM19633).